The chain runs to 437 residues: MSAPRVSFVSLGCPKALVDSERIITSLRSEGYEISRKHDGADLVIVNTCGFLDSARDESLDAIGLALNENGKVIVTGCLGAEPDVIRERHPNVLAITGPQAYESVMSAVHEAVPPAHDPFVDLVPPQGVKLTPRHYAYLKISEGCSNRCSFCIIPALRGDLVSRPIDSVLREAEKLVNAGVKEILVISQDTSAYGLDIKYQEAMWQDRTVRTKFLDLSRELGDMGVWVRMHYVYPYPHVDEVIPLMAEGKILPYLDIPFQHASPAVLKNMRRPAHQEKTSRRIQAWRETCPDLAVRSTFIVGYPGETEEDFEILLDWLDEAKIERAGCFKYEPVKGAKANDLGLEQVPEEIKEARWHRFMAKQQQISTNLLKKKVGKRLPVIIDEANGTIGKGRTRYDAPEIDGSVHIQSRRPLRVGDIVTVKIEASDAYDLHGIAV.

Positions 4–114 (PRVSFVSLGC…VMSAVHEAVP (111 aa)) constitute an MTTase N-terminal domain. Cys-13, Cys-49, Cys-78, Cys-145, Cys-149, and Cys-152 together coordinate [4Fe-4S] cluster. The Radical SAM core domain maps to 131–369 (LTPRHYAYLK…MAKQQQISTN (239 aa)). The TRAM domain maps to 372–437 (KKKVGKRLPV…DAYDLHGIAV (66 aa)).

It belongs to the methylthiotransferase family. RimO subfamily. The cofactor is [4Fe-4S] cluster.

It is found in the cytoplasm. It carries out the reaction L-aspartate(89)-[ribosomal protein uS12]-hydrogen + (sulfur carrier)-SH + AH2 + 2 S-adenosyl-L-methionine = 3-methylsulfanyl-L-aspartate(89)-[ribosomal protein uS12]-hydrogen + (sulfur carrier)-H + 5'-deoxyadenosine + L-methionine + A + S-adenosyl-L-homocysteine + 2 H(+). Catalyzes the methylthiolation of an aspartic acid residue of ribosomal protein uS12. This chain is Ribosomal protein uS12 methylthiotransferase RimO, found in Brucella anthropi (strain ATCC 49188 / DSM 6882 / CCUG 24695 / JCM 21032 / LMG 3331 / NBRC 15819 / NCTC 12168 / Alc 37) (Ochrobactrum anthropi).